The sequence spans 391 residues: Phosphoglycerate kinase (391 aa).

Substrate contacts are provided by residues 21-23 (DLN), arginine 36, 59-62 (HLGR), arginine 113, and arginine 146. ATP is bound by residues lysine 197, glutamate 319, and 345 to 348 (GGDT).

The protein belongs to the phosphoglycerate kinase family. In terms of assembly, monomer.

It localises to the cytoplasm. The enzyme catalyses (2R)-3-phosphoglycerate + ATP = (2R)-3-phospho-glyceroyl phosphate + ADP. The protein operates within carbohydrate degradation; glycolysis; pyruvate from D-glyceraldehyde 3-phosphate: step 2/5. The chain is Phosphoglycerate kinase from Stenotrophomonas maltophilia (strain K279a).